A 393-amino-acid polypeptide reads, in one-letter code: SET domain-containing protein DDB_G0283443 (393 aa).

Positions 17–312 (KKIEINETLE…KGDELSISYI (296 aa)) constitute an SET domain.

The protein belongs to the class V-like SAM-binding methyltransferase superfamily.

Probable methyltransferase. The chain is SET domain-containing protein DDB_G0283443 from Dictyostelium discoideum (Social amoeba).